The sequence spans 347 residues: Methionine import ATP-binding protein MetN (347 aa).

The 240-residue stretch at Ile-2–Leu-241 folds into the ABC transporter domain. Gly-38–Ser-45 contacts ATP.

Belongs to the ABC transporter superfamily. Methionine importer (TC 3.A.1.24) family. The complex is composed of two ATP-binding proteins (MetN), two transmembrane proteins (MetI) and a solute-binding protein (MetQ).

The protein resides in the cell inner membrane. It catalyses the reaction L-methionine(out) + ATP + H2O = L-methionine(in) + ADP + phosphate + H(+). The catalysed reaction is D-methionine(out) + ATP + H2O = D-methionine(in) + ADP + phosphate + H(+). Part of the ABC transporter complex MetNIQ involved in methionine import. Responsible for energy coupling to the transport system. This is Methionine import ATP-binding protein MetN from Chromohalobacter salexigens (strain ATCC BAA-138 / DSM 3043 / CIP 106854 / NCIMB 13768 / 1H11).